Consider the following 129-residue polypeptide: UPF0344 protein SSP1805 (129 aa).

4 helical membrane passes run 1-21 (MLHM…AAYF), 36-56 (IHML…WVWI), 68-88 (MLLT…EVTI), and 100-120 (LMWT…ILPM).

It belongs to the UPF0344 family.

It is found in the cell membrane. The chain is UPF0344 protein SSP1805 from Staphylococcus saprophyticus subsp. saprophyticus (strain ATCC 15305 / DSM 20229 / NCIMB 8711 / NCTC 7292 / S-41).